We begin with the raw amino-acid sequence, 148 residues long: Cyanate hydratase (148 aa).

Catalysis depends on residues Arg-89, Glu-92, and Ser-115.

This sequence belongs to the cyanase family.

It catalyses the reaction cyanate + hydrogencarbonate + 3 H(+) = NH4(+) + 2 CO2. Catalyzes the reaction of cyanate with bicarbonate to produce ammonia and carbon dioxide. The polypeptide is Cyanate hydratase (Sulfurisphaera tokodaii (strain DSM 16993 / JCM 10545 / NBRC 100140 / 7) (Sulfolobus tokodaii)).